Here is a 346-residue protein sequence, read N- to C-terminus: Protein RecA (346 aa).

ATP is bound at residue G66 to T73.

It belongs to the RecA family.

The protein resides in the cytoplasm. In terms of biological role, can catalyze the hydrolysis of ATP in the presence of single-stranded DNA, the ATP-dependent uptake of single-stranded DNA by duplex DNA, and the ATP-dependent hybridization of homologous single-stranded DNAs. It interacts with LexA causing its activation and leading to its autocatalytic cleavage. This Aromatoleum aromaticum (strain DSM 19018 / LMG 30748 / EbN1) (Azoarcus sp. (strain EbN1)) protein is Protein RecA.